Here is a 217-residue protein sequence, read N- to C-terminus: Probable transaldolase (217 aa).

Lys-83 functions as the Schiff-base intermediate with substrate in the catalytic mechanism.

It belongs to the transaldolase family. Type 3B subfamily.

The protein localises to the cytoplasm. The catalysed reaction is D-sedoheptulose 7-phosphate + D-glyceraldehyde 3-phosphate = D-erythrose 4-phosphate + beta-D-fructose 6-phosphate. It functions in the pathway carbohydrate degradation; pentose phosphate pathway; D-glyceraldehyde 3-phosphate and beta-D-fructose 6-phosphate from D-ribose 5-phosphate and D-xylulose 5-phosphate (non-oxidative stage): step 2/3. In terms of biological role, transaldolase is important for the balance of metabolites in the pentose-phosphate pathway. The protein is Probable transaldolase of Anaeromyxobacter dehalogenans (strain 2CP-C).